A 444-amino-acid polypeptide reads, in one-letter code: Adenylyltransferase and sulfurtransferase UBA4 (444 aa).

ATP-binding positions include Gly81, Asp102, 109–113 (SNLHR), Lys126, and 170–171 (DT). Residues Cys212 and Cys215 each coordinate Zn(2+). The Glycyl thioester intermediate; for adenylyltransferase activity role is filled by Cys229. 2 residues coordinate Zn(2+): Cys290 and Cys293. One can recognise a Rhodanese domain in the interval 343-442 (KTKPYVLLDV…YIDEINPSLP (100 aa)). The active-site Cysteine persulfide intermediate; for sulfurtransferase activity is the Cys401.

This sequence in the N-terminal section; belongs to the HesA/MoeB/ThiF family. UBA4 subfamily. The cofactor is Zn(2+).

It is found in the cytoplasm. The protein localises to the cytosol. It participates in tRNA modification; 5-methoxycarbonylmethyl-2-thiouridine-tRNA biosynthesis. Plays a central role in 2-thiolation of mcm(5)S(2)U at tRNA wobble positions of cytosolic tRNA(Lys), tRNA(Glu) and tRNA(Gln). Acts by mediating the C-terminal thiocarboxylation of sulfur carrier URM1. Its N-terminus first activates URM1 as acyl-adenylate (-COAMP), then the persulfide sulfur on the catalytic cysteine is transferred to URM1 to form thiocarboxylation (-COSH) of its C-terminus. The reaction probably involves hydrogen sulfide that is generated from the persulfide intermediate and that acts as a nucleophile towards URM1. Subsequently, a transient disulfide bond is formed. Does not use thiosulfate as sulfur donor; NFS1 probably acting as a sulfur donor for thiocarboxylation reactions. Prior mcm(5) tRNA modification by the elongator complex is required for 2-thiolation. May also be involved in protein urmylation. In Kluyveromyces lactis (strain ATCC 8585 / CBS 2359 / DSM 70799 / NBRC 1267 / NRRL Y-1140 / WM37) (Yeast), this protein is Adenylyltransferase and sulfurtransferase UBA4.